The following is a 210-amino-acid chain: DNA dC-&gt;dU-editing enzyme APOBEC-3H (210 aa).

A CMP/dCMP-type deaminase domain is found at 4–126; that stretch reads LTAKTFSLQF…PNYQEGLLLL (123 aa). H54 lines the Zn(2+) pocket. Catalysis depends on E56, which acts as the Proton donor. Residues C85 and C88 each coordinate Zn(2+). A necessary and sufficient for localization to the cytoplasm region spans residues 182-210; the sequence is SRSVDVLENGLRSLQLGPVTPSSSIRNSR.

This sequence belongs to the cytidine and deoxycytidylate deaminase family. Homodimer. It depends on Zn(2+) as a cofactor.

It is found in the cytoplasm. It carries out the reaction a 2'-deoxycytidine in single-stranded DNA + H2O + H(+) = a 2'-deoxyuridine in single-stranded DNA + NH4(+). Its activity is regulated as follows. Antiviral activity is neutralized by the simian immunodeficiency virus rhesus (SIV-mac) virion infectivity factor (VIF). Functionally, DNA deaminase (cytidine deaminase) which acts as an inhibitor of retrovirus replication and retrotransposon mobility via deaminase-dependent and -independent mechanisms. Exhibits antiviral activity against vif-deficient HIV-1. After the penetration of retroviral nucleocapsids into target cells of infection and the initiation of reverse transcription, it can induce the conversion of cytosine to uracil in the minus-sense single-strand viral DNA, leading to G-to-A hypermutations in the subsequent plus-strand viral DNA. The resultant detrimental levels of mutations in the proviral genome, along with a deamination-independent mechanism that works prior to the proviral integration, together exert efficient antiretroviral effects in infected target cells. Selectively targets single-stranded DNA and does not deaminate double-stranded DNA or single- or double-stranded RNA. The polypeptide is DNA dC-&gt;dU-editing enzyme APOBEC-3H (Macaca mulatta (Rhesus macaque)).